The following is a 310-amino-acid chain: MALPRRPPTLTRVYLDGPFGIGKTSILNAMPDHTPDGAPILKVYEPMKYWRCQSTDLVVAANETPERRRGGALSRFQSDMIMASIQARFADPYLLFHERLSSKCRGKIEICDTPAIILMLDRHPVAAILCFPITRYLLGEYSLEMLISSIIRLPLESPGCNLTVTILPDEKEHVNRICSRDRPGETADRNMLRTLNAVYASLVDTVKYANLTCPYEKESWEMEWLGLPWFEESLLEEFISRPRPVICSRTRMPLDRTLLAIFKRKELCSENGELLTQYSWILWGLLTKLHTINVELFDISGMSRRECATL.

17-24 contacts ATP; the sequence is GPFGIGKT. The active-site Proton acceptor is the glutamate 45. Glutamine 86 provides a ligand contact to substrate. Residue arginine 176 participates in ATP binding. Residue arginine 182 coordinates substrate.

Belongs to the herpesviridae thymidine kinase family. As to quaternary structure, homodimer.

The catalysed reaction is thymidine + ATP = dTMP + ADP + H(+). Its function is as follows. Catalyzes the transfer of the gamma-phospho group of ATP to thymidine to generate dTMP in the salvage pathway of pyrimidine synthesis. The dTMP serves as a substrate for DNA polymerase during viral DNA replication. Allows the virus to be reactivated and to grow in non-proliferative cells lacking a high concentration of phosphorylated nucleic acid precursors. This Gallus gallus (Chicken) protein is Thymidine kinase.